Reading from the N-terminus, the 295-residue chain is Tyrosine recombinase XerC (295 aa).

One can recognise a Core-binding (CB) domain in the interval 1 to 85 (MHILLQKYYN…ALRQFLNYLV (85 aa)). A Tyr recombinase domain is found at 106-285 (YLPKNMDMEQ…DFQHLAQVYD (180 aa)). Residues Arg-145, Lys-169, His-237, Arg-240, and His-263 contribute to the active site. Tyr-272 acts as the O-(3'-phospho-DNA)-tyrosine intermediate in catalysis.

This sequence belongs to the 'phage' integrase family. XerC subfamily. In terms of assembly, forms a cyclic heterotetrameric complex composed of two molecules of XerC and two molecules of XerD.

The protein resides in the cytoplasm. Site-specific tyrosine recombinase, which acts by catalyzing the cutting and rejoining of the recombining DNA molecules. The XerC-XerD complex is essential to convert dimers of the bacterial chromosome into monomers to permit their segregation at cell division. It also contributes to the segregational stability of plasmids. The protein is Tyrosine recombinase XerC of Histophilus somni (strain 2336) (Haemophilus somnus).